A 164-amino-acid chain; its full sequence is Protein-export protein SecB (164 aa).

Belongs to the SecB family. In terms of assembly, homotetramer, a dimer of dimers. One homotetramer interacts with 1 SecA dimer.

The protein localises to the cytoplasm. One of the proteins required for the normal export of preproteins out of the cell cytoplasm. It is a molecular chaperone that binds to a subset of precursor proteins, maintaining them in a translocation-competent state. It also specifically binds to its receptor SecA. The polypeptide is Protein-export protein SecB (Nitrosococcus oceani (strain ATCC 19707 / BCRC 17464 / JCM 30415 / NCIMB 11848 / C-107)).